The sequence spans 285 residues: Polyamine aminopropyltransferase (285 aa).

The PABS domain occupies 5–241 (DSWFTEHFQA…GWWSVTLSSK (237 aa)). Gln-35 contacts S-methyl-5'-thioadenosine. Spermidine is bound by residues His-66 and Asp-90. S-methyl-5'-thioadenosine-binding positions include Asp-110 and 141–142 (DG). The Proton acceptor role is filled by Asp-160. 160-163 (DSTD) contacts spermidine. Pro-167 lines the S-methyl-5'-thioadenosine pocket.

The protein belongs to the spermidine/spermine synthase family. In terms of assembly, homodimer or homotetramer.

The protein resides in the cytoplasm. The enzyme catalyses S-adenosyl 3-(methylsulfanyl)propylamine + putrescine = S-methyl-5'-thioadenosine + spermidine + H(+). Its pathway is amine and polyamine biosynthesis; spermidine biosynthesis; spermidine from putrescine: step 1/1. In terms of biological role, catalyzes the irreversible transfer of a propylamine group from the amino donor S-adenosylmethioninamine (decarboxy-AdoMet) to putrescine (1,4-diaminobutane) to yield spermidine. The sequence is that of Polyamine aminopropyltransferase from Xylella fastidiosa (strain 9a5c).